A 172-amino-acid polypeptide reads, in one-letter code: MRTLVMVACAVSLAACSSPPKPPTVSGRHRIPINSPAAQEELRLQVFPQEPTAQATMWPARPPKQTVSVYFPQDVTVFRPTSAQINQLHTLLWPVPKHINVRGLTDNNCPPPGDTQVARVRALAIYNWLINQGVSASRITISYAPVKDYASNAPLSPGRVLNRRVDIEILRK.

The first 15 residues, 1-15 (MRTLVMVACAVSLAA), serve as a signal peptide directing secretion. The N-palmitoyl cysteine moiety is linked to residue cysteine 16. Residue cysteine 16 is the site of S-diacylglycerol cysteine attachment. An OmpA-like domain is found at 58–172 (WPARPPKQTV…RRVDIEILRK (115 aa)).

The protein localises to the cell outer membrane. The VirB system could be required for the establishment of the replication niche in the host. The sequence is that of Type IV secretion system putative outer membrane lipoprotein BRA0058/BS1330_II0058 from Brucella suis biovar 1 (strain 1330).